A 264-amino-acid polypeptide reads, in one-letter code: Small ribosomal subunit protein eS4 (264 aa).

The S4 RNA-binding domain occupies 42–104 (LPLVIIMRNR…TNENFRLLYD (63 aa)).

Belongs to the eukaryotic ribosomal protein eS4 family.

It localises to the cytoplasm. The chain is Small ribosomal subunit protein eS4 (RPS4) from Solanum tuberosum (Potato).